Reading from the N-terminus, the 490-residue chain is Betaine aldehyde dehydrogenase (490 aa).

Ile-27 and Asp-93 together coordinate K(+). 150 to 152 serves as a coordination point for NAD(+); it reads GAW. Residue Lys-162 is the Charge relay system of the active site. An NAD(+)-binding site is contributed by 176–179; the sequence is KPSE. Position 180 (Val-180) interacts with K(+). 230–233 is a binding site for NAD(+); sequence GTDT. Leu-246 lines the K(+) pocket. The active-site Proton acceptor is Glu-252. Positions 254, 286, and 387 each coordinate NAD(+). The active-site Nucleophile is Cys-286. Cys-286 bears the Cysteine sulfenic acid (-SOH) mark. Lys-457 and Gly-460 together coordinate K(+). Glu-464 acts as the Charge relay system in catalysis.

It belongs to the aldehyde dehydrogenase family. As to quaternary structure, dimer of dimers. It depends on K(+) as a cofactor.

The catalysed reaction is betaine aldehyde + NAD(+) + H2O = glycine betaine + NADH + 2 H(+). It participates in amine and polyamine biosynthesis; betaine biosynthesis via choline pathway; betaine from betaine aldehyde: step 1/1. Involved in the biosynthesis of the osmoprotectant glycine betaine. Catalyzes the irreversible oxidation of betaine aldehyde to the corresponding acid. In Pseudomonas fluorescens (strain Pf0-1), this protein is Betaine aldehyde dehydrogenase.